The sequence spans 177 residues: Large ribosomal subunit protein uL6 (177 aa).

The protein belongs to the universal ribosomal protein uL6 family. In terms of assembly, part of the 50S ribosomal subunit.

This protein binds to the 23S rRNA, and is important in its secondary structure. It is located near the subunit interface in the base of the L7/L12 stalk, and near the tRNA binding site of the peptidyltransferase center. The chain is Large ribosomal subunit protein uL6 from Paramagnetospirillum magneticum (strain ATCC 700264 / AMB-1) (Magnetospirillum magneticum).